A 477-amino-acid polypeptide reads, in one-letter code: MISAVLTTQPVHIIGAGLAGSEAAWQVARAGIRVVLHEMRPDRMTQAHKTDGLAELVCSNSFRSDDAANNAVGLLHAEMRKLGSLVMRAADANQVPAGGALAVDRDGFSAAVTKALAEHPLIEIRREEIGGLPPEDWGNVIIATGPLTSAPLAEAIRALTDESALAFFDAIAPIVHRDSIDMSVAWFQSRYDKAGPGGSGADYLNCPMTREQYDGFVDALIEGEKVDFKDWERDTPYFDGCLPIEVMAERGRETLRHGPMKPVGLTNPHNPLVKSYAIVQLRQDNKLGTLFNMVGFQTKLNYGAQQRVFRTIPGLENAEFARLGGLHRNTFLNSPKLLDPQLRLRAAPRLRFAGQMTGCEGYVESAGIGLVAGLCAAADAIGQTLAAPPPTTALGALLGHITGGHIETIDAGPRSFQPMNINFGLFPPLATAPTHGPDGKKLRGPEKSVAKKQALSARALADLDRWIGDCLKLPAAA.

15 to 20 (GAGLAG) serves as a coordination point for FAD.

The protein belongs to the MnmG family. TrmFO subfamily. FAD is required as a cofactor.

It localises to the cytoplasm. The enzyme catalyses uridine(54) in tRNA + (6R)-5,10-methylene-5,6,7,8-tetrahydrofolate + NADH + H(+) = 5-methyluridine(54) in tRNA + (6S)-5,6,7,8-tetrahydrofolate + NAD(+). The catalysed reaction is uridine(54) in tRNA + (6R)-5,10-methylene-5,6,7,8-tetrahydrofolate + NADPH + H(+) = 5-methyluridine(54) in tRNA + (6S)-5,6,7,8-tetrahydrofolate + NADP(+). Catalyzes the folate-dependent formation of 5-methyl-uridine at position 54 (M-5-U54) in all tRNAs. This is Methylenetetrahydrofolate--tRNA-(uracil-5-)-methyltransferase TrmFO from Rhodopseudomonas palustris (strain BisB5).